The chain runs to 30 residues: 136 kDa hydroxyproline-rich cell wall glycoprotein, major component (30 aa).

Pro8, Pro9, Pro10, Pro11, Pro12, Pro17, Pro18, Pro19, Pro20, Pro26, Pro27, Pro28, and Pro29 each carry 4-hydroxyproline.

Post-translationally, O-glycosylated.

Its subcellular location is the secreted. The protein localises to the cell wall. This is 136 kDa hydroxyproline-rich cell wall glycoprotein, major component from Phaseolus vulgaris (Kidney bean).